A 108-amino-acid polypeptide reads, in one-letter code: X antigen family member 5 (108 aa).

The interval 20–108 is disordered; that stretch reads VGPMLEPSVP…PEGGEGKPQL (89 aa). 2 stretches are compositionally biased toward basic and acidic residues: residues 40 to 52 and 94 to 108; these read SQDH…REDD and EQFK…KPQL.

This sequence belongs to the GAGE family.

The polypeptide is X antigen family member 5 (XAGE5) (Homo sapiens (Human)).